Here is a 440-residue protein sequence, read N- to C-terminus: MKKFSIVVAGGGSTFTPGIVLMLLENLDKFPIRQIKFYDNDAQRQEVIAKACDIIIKEKAPDINFVYTTDPETAFTDIDFVMAHIRVGKYAMREKDEKIPLRHGVLGQETCGPGGISYGMRSIGGVIELVDYMEKYSPNAWMLNYSNPAAIVAEATRRLRPNSKILNICDMPIGIEIRMAEMLGLKSRKDMVIRYFGLNHFGWWTDIRDKKGNDLMPALREKVAKIGYNVEIEGENTEASWNDTFTKARDVFAIDPTTMPNTYLKYYFFPDYVVEHSNPNHTRANEVMEGREKFVFGECRAIAEKGTAKDSKLHVDDHASYIVDLARAIAYDTKERMLLIVENDGAISNFDPTAMVEVPCIVGSNGPEKIVQGKIPQFQKGLMEQQVSVEKLTVEAWMEGSYQKLWQAITLSRTVPSASVAKAILDDLIEANKDFWPVLK.

4–70 (FSIVVAGGGS…PDINFVYTTD (67 aa)) lines the NAD(+) pocket. Residues Arg-93 and Asn-147 each contribute to the substrate site. Residue Cys-169 participates in Mn(2+) binding. Asp-170 serves as the catalytic Proton donor. Mn(2+) is bound at residue His-200. The active-site Proton acceptor is Tyr-263. Position 283 (Arg-283) interacts with substrate.

It belongs to the glycosyl hydrolase 4 family. As to quaternary structure, homodimer. NAD(+) serves as cofactor. Mn(2+) is required as a cofactor.

It functions in the pathway glycan degradation; palatinose degradation. In terms of biological role, in vitro, readily hydrolyzes p-nitrophenyl-alpha-D-glucopyranoside 6-phosphate (pNPalphaG6P), a chromogenic analog of the phosphorylated isomers of sucrose. In vivo, is probably involved in the degradation of the 6-phosphate derivatives of the sucrose isomers trehalulose, turanose, maltulose and palatinose, catalyzing their hydrolysis into glucose 6-phosphate (G6P) and fructose, which allows the bacterium to use these sugars as energy sources for growth. Is not able to hydrolyze the C2 or C4 chromogenic stereomers (i.e. pNPalpha-mannopyranoside-6P and pNPalpha-galactopyranoside-6P, respectively). The protein is 6-phospho-alpha-glucosidase (pagL) of Leptotrichia buccalis (strain ATCC 14201 / DSM 1135 / JCM 12969 / NCTC 10249 / C-1013-b).